The following is a 242-amino-acid chain: Small ribosomal subunit protein uS2 (242 aa).

This sequence belongs to the universal ribosomal protein uS2 family.

The polypeptide is Small ribosomal subunit protein uS2 (Shewanella sediminis (strain HAW-EB3)).